The primary structure comprises 79 residues: uncharacterized protein (79 aa).

An N-terminal signal peptide occupies residues 1–33 (MRLSIRAIVLFALVWIGLLMSGYGVLVGSKVNA).

This is an uncharacterized protein from Salmonella paratyphi A (strain ATCC 9150 / SARB42).